The primary structure comprises 292 residues: Ribosomal protein L11 methyltransferase (292 aa).

S-adenosyl-L-methionine contacts are provided by Thr-136, Gly-159, Asp-181, and Asn-228.

It belongs to the methyltransferase superfamily. PrmA family.

The protein localises to the cytoplasm. The catalysed reaction is L-lysyl-[protein] + 3 S-adenosyl-L-methionine = N(6),N(6),N(6)-trimethyl-L-lysyl-[protein] + 3 S-adenosyl-L-homocysteine + 3 H(+). Its function is as follows. Methylates ribosomal protein L11. This is Ribosomal protein L11 methyltransferase from Rhizobium leguminosarum bv. trifolii (strain WSM2304).